The following is a 678-amino-acid chain: GAS2-like protein 1 (678 aa).

The residue at position 2 (Ala-2) is an N-acetylalanine. One can recognise a Calponin-homology (CH) domain in the interval 27–148 (EAMKEDLADW…CLLEVARRGA (122 aa)). Residues 203-275 (NDLRNLDELV…HYLDKHDPCR (73 aa)) form the GAR domain. Residues 276-291 (CSSSTHRLPQQRTGTF) show a composition bias toward polar residues. Disordered stretches follow at residues 276–524 (CSSS…FRRL) and 538–678 (AASH…DSSM). Phosphoserine is present on residues Ser-306 and Ser-316. The span at 327–340 (GTKEGPETPLRPRD) shows a compositional bias: basic and acidic residues. A Phosphothreonine modification is found at Thr-334. Phosphoserine occurs at positions 352 and 355. Residues 354-365 (DSDSSASSAQSG) show a composition bias toward low complexity. Over residues 370–381 (RSDDSATGSRRE) the composition is skewed to basic and acidic residues. Residues 392 to 403 (PASPRRPTAPRS) are compositionally biased toward low complexity. Phosphoserine is present on Ser-394. Positions 404–413 (QSRDRLDRGR) are enriched in basic and acidic residues. Residues Ser-436 and Ser-438 each carry the phosphoserine modification. Residues 437-454 (QSREEQAVLMVRRDRDGQ) show a composition bias toward basic and acidic residues. The span at 461-471 (GRGGGGSGGSG) shows a compositional bias: gly residues. Ser-482 and Ser-489 each carry phosphoserine. Positions 485-495 (APRPSRGPSPG) are enriched in pro residues. Arg-490 is subject to Omega-N-methylarginine. Ser-493 carries the phosphoserine modification. The residue at position 501 (Thr-501) is a Phosphothreonine. The residue at position 507 (Arg-507) is an Omega-N-methylarginine. Low complexity-rich tracts occupy residues 509 to 519 (PLQLDPQQEQQ) and 554 to 568 (DSAY…SSLS). Omega-N-methylarginine is present on Arg-630. Residues 631–641 (GRMDTQPDRKP) are compositionally biased toward basic and acidic residues. Ser-654 bears the Phosphoserine mark. The segment covering 666 to 678 (HSVTPRTEPDSSM) has biased composition (polar residues).

This sequence belongs to the GAS2 family. In terms of assembly, interacts with MAPRE1.

The protein localises to the cytoplasm. Its subcellular location is the cytoskeleton. The protein resides in the stress fiber. Functionally, seems to be involved in the cross-linking of microtubules and microfilaments. Regulates microtubule dynamics and stability by interacting with microtubule plus-end tracking proteins, such as MAPRE1, to regulate microtubule growth along actin stress fibers. This chain is GAS2-like protein 1 (Gas2l1), found in Mus musculus (Mouse).